Consider the following 377-residue polypeptide: tRNA N6-adenosine threonylcarbamoyltransferase (377 aa).

Positions 129 and 133 each coordinate Fe cation. Residues 151-155 (LVSGG), D184, G197, and N298 each bind substrate. A Fe cation-binding site is contributed by D326. Positions 358 to 377 (DGAAAKSDPAIGSGRKGPKA) are disordered.

This sequence belongs to the KAE1 / TsaD family. Fe(2+) is required as a cofactor.

It localises to the cytoplasm. The catalysed reaction is L-threonylcarbamoyladenylate + adenosine(37) in tRNA = N(6)-L-threonylcarbamoyladenosine(37) in tRNA + AMP + H(+). Its function is as follows. Required for the formation of a threonylcarbamoyl group on adenosine at position 37 (t(6)A37) in tRNAs that read codons beginning with adenine. Is involved in the transfer of the threonylcarbamoyl moiety of threonylcarbamoyl-AMP (TC-AMP) to the N6 group of A37, together with TsaE and TsaB. TsaD likely plays a direct catalytic role in this reaction. The sequence is that of tRNA N6-adenosine threonylcarbamoyltransferase from Maricaulis maris (strain MCS10) (Caulobacter maris).